Here is an 855-residue protein sequence, read N- to C-terminus: Potassium channel AKT2 (855 aa).

Residues 1-12 (MKTSSFESASSS) show a composition bias toward low complexity. Positions 1–24 (MKTSSFESASSSGGSGGGGGGGGG) are disordered. At 1–75 (MKTSSFESAS…PLDSRYRCWD (75 aa)) the chain is on the cytoplasmic side. A compositionally biased stretch (gly residues) spans 13-24 (GGSGGGGGGGGG). A helical membrane pass occupies residues 76-96 (TFMVVLVAYSAWVYPFEVAFM). The Extracellular segment spans residues 97 to 105 (NASPKGGLE). A helical membrane pass occupies residues 106–126 (VADIVVDLFFAVDIVLTFFVA). Topologically, residues 127–149 (YIDSRTQLLVRDRRRIATRYLST) are cytoplasmic. Residues 150-170 (FFIMDVASTIPFQGLAYIVTG) form a helical membrane-spanning segment. At 171-179 (EVRESPAFS) the chain is on the extracellular side. Residues 180 to 200 (LLGILRLWRLRKVKQFFTRLE) form a helical; Voltage-sensor membrane-spanning segment. The Cytoplasmic portion of the chain corresponds to 201–214 (KDIRFNYFWIRCAR). Residues 215–235 (LIAVTLFLVHCAGCLYYLIAD) form a helical membrane-spanning segment. The Extracellular portion of the chain corresponds to 236-262 (RYPHREKTWIGAVIPDFQEASLWIRYT). Residues 263–282 (SSVYWSITTMTTVGYGDMHA) constitute an intramembrane region (pore-forming). Topologically, residues 283 to 285 (QNT) are extracellular. Residues 286–306 (VEMIFNIFYMLFNLGLTAYLI) traverse the membrane as a helical segment. The Cytoplasmic segment spans residues 307 to 855 (GNMTNLVVEG…VASMDSVSGS (549 aa)). Residue 391 to 511 (LFKGVSREVL…VVIIKNFLKH (121 aa)) participates in a nucleoside 3',5'-cyclic phosphate binding. ANK repeat units follow at residues 536-565 (NIPCNLLTVAATGNSSFLEDLLKVGMDPDV), 569-598 (KGRTALHIAASKGYEDCVLVLLKQACNVNI), 602-631 (QGNTALWNAIAARHHKIFNILYHFARVSSP), 634-663 (AAGDLLCLAARRGDLDTLRELLKHGLAVDS), and 667-696 (DGATALRVALAEGHADVARLLVLNGASVDR). The segment at 744–765 (EVGSSGDSRNGRRQSARSDGAH) is disordered. Positions 768–855 (RVSIYRGHPF…VASMDSVSGS (88 aa)) constitute a KHA domain.

This sequence belongs to the potassium channel family. Plant (TC 1.A.1.4) subfamily. In terms of assembly, the potassium channel is probably a homo- or heterotetrameric complex of pore-forming subunits.

It is found in the membrane. Probable inward-rectifying potassium channel. Assuming opened or closed conformations in response to the voltage difference across the membrane, the channel is activated by hyperpolarization. The polypeptide is Potassium channel AKT2 (Oryza sativa subsp. japonica (Rice)).